A 281-amino-acid chain; its full sequence is ATP synthase gamma chain (281 aa).

The protein belongs to the ATPase gamma chain family. As to quaternary structure, F-type ATPases have 2 components, CF(1) - the catalytic core - and CF(0) - the membrane proton channel. CF(1) has five subunits: alpha(3), beta(3), gamma(1), delta(1), epsilon(1). CF(0) has three main subunits: a, b and c.

Its subcellular location is the cell membrane. Produces ATP from ADP in the presence of a proton gradient across the membrane. The gamma chain is believed to be important in regulating ATPase activity and the flow of protons through the CF(0) complex. This Clostridium pasteurianum protein is ATP synthase gamma chain.